A 129-amino-acid polypeptide reads, in one-letter code: Histone H2A (129 aa).

It belongs to the histone H2A family. The nucleosome is a histone octamer containing two molecules each of H2A, H2B, H3 and H4 assembled in one H3-H4 heterotetramer and two H2A-H2B heterodimers. The octamer wraps approximately 147 bp of DNA.

Its subcellular location is the nucleus. The protein resides in the chromosome. In terms of biological role, core component of nucleosome. Nucleosomes wrap and compact DNA into chromatin, limiting DNA accessibility to the cellular machineries which require DNA as a template. Histones thereby play a central role in transcription regulation, DNA repair, DNA replication and chromosomal stability. DNA accessibility is regulated via a complex set of post-translational modifications of histones, also called histone code, and nucleosome remodeling. This chain is Histone H2A (H2A-II), found in Chlamydomonas reinhardtii (Chlamydomonas smithii).